Here is a 132-residue protein sequence, read N- to C-terminus: Large ribosomal subunit protein bL21 (132 aa).

Residues 111–132 (AAEKPARKPRAKKTNEVTTDGA) are disordered.

It belongs to the bacterial ribosomal protein bL21 family. In terms of assembly, part of the 50S ribosomal subunit. Contacts protein L20.

This protein binds to 23S rRNA in the presence of protein L20. The polypeptide is Large ribosomal subunit protein bL21 (Dehalococcoides mccartyi (strain CBDB1)).